The primary structure comprises 118 residues: Peptidyl-tRNA hydrolase (118 aa).

The protein belongs to the PTH2 family.

The protein resides in the cytoplasm. The catalysed reaction is an N-acyl-L-alpha-aminoacyl-tRNA + H2O = an N-acyl-L-amino acid + a tRNA + H(+). The natural substrate for this enzyme may be peptidyl-tRNAs which drop off the ribosome during protein synthesis. This chain is Peptidyl-tRNA hydrolase, found in Thermococcus sibiricus (strain DSM 12597 / MM 739).